Here is a 226-residue protein sequence, read N- to C-terminus: N-acetylmuramic acid 6-phosphate phosphatase (226 aa).

Aspartate 12 serves as the catalytic Nucleophile. Mg(2+) is bound by residues aspartate 12, aspartate 14, and aspartate 171. The Proton donor role is filled by aspartate 14.

Belongs to the HAD-like hydrolase superfamily. CbbY/CbbZ/Gph/YieH family. Phosphatase MupP subfamily. It depends on Mg(2+) as a cofactor.

It catalyses the reaction N-acetyl-D-muramate 6-phosphate + H2O = N-acetyl-D-muramate + phosphate. Its pathway is cell wall biogenesis; peptidoglycan recycling. Its function is as follows. Specifically catalyzes the dephosphorylation of N-acetylmuramate 6-phosphate (MurNAc-6P) to MurNac. Is involved in peptidoglycan recycling as part of a cell wall recycling pathway that bypasses de novo biosynthesis of the peptidoglycan precursor UDP-MurNAc. Plays a role in intrinsic resistance to fosfomycin, which targets the de novo synthesis of UDP-MurNAc. The sequence is that of N-acetylmuramic acid 6-phosphate phosphatase from Pseudomonas aeruginosa (strain ATCC 15692 / DSM 22644 / CIP 104116 / JCM 14847 / LMG 12228 / 1C / PRS 101 / PAO1).